A 347-amino-acid chain; its full sequence is Transcription factor EC (347 aa).

Residues 1–119 (MTLDHQIINP…GLTSASCPSS (119 aa)) are necessary for transcriptional transactivation. In terms of domain architecture, bHLH spans 139 to 192 (QKKDNHNLIERRRRYNINYRIKELGTLIPKSNDPDMRWNKGTILKASVEYIKWL). Residues 271–347 (PSPELCDQAI…SFSSDDGDEL (77 aa)) are necessary for transcriptional transactivation. The interval 319-347 (DPLLSATSPAVSKESSRRSSFSSDDGDEL) is disordered. Residues 326–341 (SPAVSKESSRRSSFSS) show a composition bias toward low complexity.

Belongs to the MiT/TFE family. Homodimer. Forms heterodimers with TFE3. Forms heterodimers with MITF. Interacts with MITF. As to expression, expressed moderately in spleen, kidney, bone marrow, small intestine and leukocytes. Expressed weakly in testis, trachea and colon.

The protein localises to the nucleus. Its function is as follows. Transcriptional regulator that acts as a repressor or an activator. Acts as a transcriptional repressor on minimal promoter containing element F (that includes an E-box sequence). Binds to element F in an E-box sequence-specific manner. Acts as a transcriptional transactivator on the proximal promoter region of the tartrate-resistant acid phosphatase (TRAP) E-box containing promoter. Collaborates with MITF in target gene activation. Acts as a transcriptional repressor on minimal promoter containing mu E3 enhancer sequence. Binds to mu E3 DNA sequence of the immunoglobulin heavy-chain gene enhancer. Binds DNA in a homo- or heterodimeric form. The polypeptide is Transcription factor EC (TFEC) (Homo sapiens (Human)).